The primary structure comprises 195 residues: Probable GTP-binding protein EngB (195 aa).

The EngB-type G domain maps to 24 to 195 (GLSEVALSGR…QIWDLIANYL (172 aa)). GTP is bound by residues 32–39 (GRSNVGKS), 59–63 (GKTQT), 77–80 (DVPG), 144–147 (TKED), and 176–178 (YSS). Mg(2+)-binding residues include serine 39 and threonine 61.

Belongs to the TRAFAC class TrmE-Era-EngA-EngB-Septin-like GTPase superfamily. EngB GTPase family. The cofactor is Mg(2+).

Functionally, necessary for normal cell division and for the maintenance of normal septation. In Staphylococcus haemolyticus (strain JCSC1435), this protein is Probable GTP-binding protein EngB.